A 282-amino-acid polypeptide reads, in one-letter code: Bifunctional protein FolD (282 aa).

Residues 165–167 (GRS) and serine 190 each bind NADP(+).

It belongs to the tetrahydrofolate dehydrogenase/cyclohydrolase family. In terms of assembly, homodimer.

It catalyses the reaction (6R)-5,10-methylene-5,6,7,8-tetrahydrofolate + NADP(+) = (6R)-5,10-methenyltetrahydrofolate + NADPH. It carries out the reaction (6R)-5,10-methenyltetrahydrofolate + H2O = (6R)-10-formyltetrahydrofolate + H(+). It participates in one-carbon metabolism; tetrahydrofolate interconversion. Its function is as follows. Catalyzes the oxidation of 5,10-methylenetetrahydrofolate to 5,10-methenyltetrahydrofolate and then the hydrolysis of 5,10-methenyltetrahydrofolate to 10-formyltetrahydrofolate. This is Bifunctional protein FolD from Acinetobacter baumannii (strain ATCC 17978 / DSM 105126 / CIP 53.77 / LMG 1025 / NCDC KC755 / 5377).